The chain runs to 330 residues: BTB/POZ domain-containing adapter for CUL3-mediated RhoA degradation protein 1 (330 aa).

Positions 1 to 34 (MSAEASGSSGGHAVTVSGSSPSSSSHVGEEKPGR) are disordered. One can recognise a BTB domain in the interval 40 to 108 (KYVKLNVGGT…LRDGTVPLPD (69 aa)). Residues 282 to 291 (GGVSSSGAGQ) show a composition bias toward low complexity. Residues 282-304 (GGVSSSGAGQSEEEGAGAGGGDR) form a disordered region.

The protein belongs to the BACURD family.

It is found in the nucleus. In terms of biological role, substrate-specific adapter of a BCR (BTB-CUL3-RBX1) E3 ubiquitin-protein ligase complex required for synaptic transmission. The BCR(KCTD13) E3 ubiquitin ligase complex mediates the ubiquitination of RHOA, leading to its degradation by the proteasome, thereby regulating the actin cytoskeleton and promoting synaptic transmission. This is BTB/POZ domain-containing adapter for CUL3-mediated RhoA degradation protein 1 from Danio rerio (Zebrafish).